We begin with the raw amino-acid sequence, 129 residues long: Cocaine- and amphetamine-regulated transcript protein (129 aa).

Positions Met1–Ala27 are cleaved as a signal peptide. Position 41 is a phosphotyrosine (Tyr41). Ser48 carries the post-translational modification Phosphoserine. Disulfide bonds link Cys95-Cys113, Cys101-Cys121, and Cys115-Cys128.

The protein belongs to the CART family.

It localises to the secreted. Functionally, satiety factor closely associated with the actions of leptin and neuropeptide y; this anorectic peptide inhibits both normal and starvation-induced feeding and completely blocks the feeding response induced by neuropeptide Y and regulated by leptin in the hypothalamus. This chain is Cocaine- and amphetamine-regulated transcript protein (Cartpt), found in Mus musculus (Mouse).